Here is a 458-residue protein sequence, read N- to C-terminus: Alpha-glucosides-binding periplasmic protein AglE (458 aa).

Residues 1-27 form the signal peptide; it reads MKRSLLIGVAAFALLAGTAGLAGTAGA.

It belongs to the bacterial solute-binding protein 1 family.

It is found in the periplasm. In terms of biological role, part of the binding-protein-dependent transport system for alpha-glucosides such as sucrose, maltose and trehalose. This chain is Alpha-glucosides-binding periplasmic protein AglE (aglE), found in Rhizobium meliloti (strain 1021) (Ensifer meliloti).